The chain runs to 183 residues: Phospholipase A2 inhibitor gamma subunit A1 (183 aa).

Cystine bridges form between Cys-3–Cys-28, Cys-6–Cys-13, Cys-21–Cys-49, Cys-55–Cys-76, Cys-77–Cys-82, Cys-100–Cys-125, Cys-118–Cys-147, and Cys-151–Cys-173. Residue Asn-158 is glycosylated (N-linked (GlcNAc...) asparagine).

The protein belongs to the CNF-like-inhibitor family. In terms of assembly, heterodimer of subunit A and subunit B. Expressed by the liver.

It is found in the secreted. Its function is as follows. Phospholipase A2 (PA2) inhibitor. Inhibits the enzymatic activity of PA2 of Deinagkistrodon acutus. Also shows a wide anti-hemorrhage activities to D.acutus, Naja atra and Agkistrodon halys venom. The native protein is more potent than the recombinant one. This chain is Phospholipase A2 inhibitor gamma subunit A1, found in Trimerodytes annularis (Red-bellied annulate keelback).